The sequence spans 503 residues: Aromatase (503 aa).

The next 2 helical transmembrane spans lie at 19-39 (EVVP…LLVW) and 53-73 (FLGI…IGSA). The substrate site is built by D309 and M374. C437 is a heme binding site.

The protein belongs to the cytochrome P450 family. The cofactor is heme.

The protein resides in the endoplasmic reticulum membrane. It is found in the microsome membrane. The enzyme catalyses testosterone + 3 reduced [NADPH--hemoprotein reductase] + 3 O2 = 17beta-estradiol + formate + 3 oxidized [NADPH--hemoprotein reductase] + 4 H2O + 4 H(+). It catalyses the reaction androst-4-ene-3,17-dione + 3 reduced [NADPH--hemoprotein reductase] + 3 O2 = estrone + formate + 3 oxidized [NADPH--hemoprotein reductase] + 4 H2O + 4 H(+). The catalysed reaction is androst-4-ene-3,17-dione + reduced [NADPH--hemoprotein reductase] + O2 = 19-hydroxyandrost-4-ene-3,17-dione + oxidized [NADPH--hemoprotein reductase] + H2O + H(+). It carries out the reaction 19-hydroxyandrost-4-ene-3,17-dione + reduced [NADPH--hemoprotein reductase] + O2 = 19-oxo-androst-4-ene-3,17-dione + oxidized [NADPH--hemoprotein reductase] + 2 H2O + H(+). The enzyme catalyses 19-oxo-androst-4-ene-3,17-dione + reduced [NADPH--hemoprotein reductase] + O2 = estrone + formate + oxidized [NADPH--hemoprotein reductase] + H2O + 2 H(+). It catalyses the reaction estrone + reduced [NADPH--hemoprotein reductase] + O2 = 2-hydroxyestrone + oxidized [NADPH--hemoprotein reductase] + H2O + H(+). The catalysed reaction is 17beta-hydroxy-5alpha-androstan-3-one + reduced [NADPH--hemoprotein reductase] + O2 = 17beta,19-dihydroxy-3-oxo-5alpha-androstanone + oxidized [NADPH--hemoprotein reductase] + H2O + H(+). It carries out the reaction 17beta,19-dihydroxy-3-oxo-5alpha-androstanone + reduced [NADPH--hemoprotein reductase] + O2 = 17beta-hydroxy-3,19-dioxo-5alpha-androstanone + oxidized [NADPH--hemoprotein reductase] + 2 H2O + H(+). The enzyme catalyses 17beta-hydroxy-3,19-dioxo-5alpha-androstanone + reduced [NADPH--hemoprotein reductase] + O2 = 17beta-hydroxy-3-oxo-19-nor-5alpha-androst-1-ene + formate + oxidized [NADPH--hemoprotein reductase] + H2O + 2 H(+). It functions in the pathway steroid hormone biosynthesis. In terms of biological role, a cytochrome P450 monooxygenase that catalyzes the conversion of C19 androgens, androst-4-ene-3,17-dione (androstenedione) and testosterone to the C18 estrogens, estrone and estradiol, respectively. Catalyzes three successive oxidations of C19 androgens: two conventional oxidations at C19 yielding 19-hydroxy and 19-oxo/19-aldehyde derivatives, followed by a third oxidative aromatization step that involves C1-beta hydrogen abstraction combined with cleavage of the C10-C19 bond to yield a phenolic A ring and formic acid. Alternatively, the third oxidative reaction yields a 19-norsteroid and formic acid. Converts dihydrotestosterone to delta1,10-dehydro 19-nordihydrotestosterone and may play a role in homeostasis of this potent androgen. Also displays 2-hydroxylase activity toward estrone. Mechanistically, uses molecular oxygen inserting one oxygen atom into a substrate, and reducing the second into a water molecule, with two electrons provided by NADPH via cytochrome P450 reductase (CPR; NADPH-ferrihemoprotein reductase). This Bos taurus (Bovine) protein is Aromatase (CYP19A1).